A 149-amino-acid chain; its full sequence is Histone H3-like 1 (149 aa).

Residues 1-19 are compositionally biased toward basic and acidic residues; the sequence is MARPRKEAPQRNLDRDENA. Residues 1-58 are disordered; that stretch reads MARPRKEAPQRNLDRDENARQQPTEEPQDEAPRNQGRQQQQQRPPAAPRRPRRFRPGT. Residues 33-44 are compositionally biased toward low complexity; it reads RNQGRQQQQQRP.

It belongs to the histone H3 family. The nucleosome is a histone octamer containing two molecules each of H2A, H2B, H3 and H4 assembled in one H3-H4 heterotetramer and two H2A-H2B heterodimers. The octamer wraps approximately 147 bp of DNA. As to expression, pollen specific.

It is found in the nucleus. It localises to the chromosome. Its function is as follows. Core component of nucleosome. Nucleosomes wrap and compact DNA into chromatin, limiting DNA accessibility to the cellular machineries which require DNA as a template. Histones thereby play a central role in transcription regulation, DNA repair, DNA replication and chromosomal stability. DNA accessibility is regulated via a complex set of post-translational modifications of histones, also called histone code, and nucleosome remodeling. This chain is Histone H3-like 1 (gH3), found in Lilium longiflorum (Trumpet lily).